The primary structure comprises 65 residues: Large ribosomal subunit protein bL35 (65 aa).

Residues 1-28 are disordered; sequence MPKMKTHRGAAKRFKKTGTGKIKRGQSK.

The protein belongs to the bacterial ribosomal protein bL35 family.

This Acidobacterium capsulatum (strain ATCC 51196 / DSM 11244 / BCRC 80197 / JCM 7670 / NBRC 15755 / NCIMB 13165 / 161) protein is Large ribosomal subunit protein bL35.